Consider the following 175-residue polypeptide: Large ribosomal subunit protein uL10 (175 aa).

This sequence belongs to the universal ribosomal protein uL10 family. In terms of assembly, part of the ribosomal stalk of the 50S ribosomal subunit. The N-terminus interacts with L11 and the large rRNA to form the base of the stalk. The C-terminus forms an elongated spine to which L12 dimers bind in a sequential fashion forming a multimeric L10(L12)X complex.

Functionally, forms part of the ribosomal stalk, playing a central role in the interaction of the ribosome with GTP-bound translation factors. The sequence is that of Large ribosomal subunit protein uL10 from Picosynechococcus sp. (strain ATCC 27264 / PCC 7002 / PR-6) (Agmenellum quadruplicatum).